The chain runs to 201 residues: Small ribosomal subunit protein eS1 (201 aa).

This sequence belongs to the eukaryotic ribosomal protein eS1 family.

This is Small ribosomal subunit protein eS1 from Methanoregula boonei (strain DSM 21154 / JCM 14090 / 6A8).